Here is a 362-residue protein sequence, read N- to C-terminus: G-protein coupled receptor 4 (362 aa).

At 1–8 the chain is on the extracellular side; that stretch reads MGNRTLEG. N-linked (GlcNAc...) asparagine glycosylation occurs at N3. Residues 9–45 form a helical membrane-spanning segment; that stretch reads CHVDSRMDHLFPPSLYIFVIGVGLPTNCLALWAAYRQ. 2 disulfides stabilise this stretch: C9–C258 and C90–C168. Residues 46 to 49 are Cytoplasmic-facing; it reads VRQR. Residues 50–80 form a helical membrane-spanning segment; it reads NELGVYLMNLSIADLLYICTLPLWVDYFLHH. At 81-85 the chain is on the extracellular side; sequence DNWIH. The chain crosses the membrane as a helical span at residues 86–121; it reads GPGSCKLFGFIFYTNIYISIAFLCCISVDRYLAVAH. Residues 122–129 lie on the Cytoplasmic side of the membrane; that stretch reads PLRFARLR. Residues 130–156 traverse the membrane as a helical segment; it reads RVKTAVAVSSVVWATELGANSAPLFHD. At 157–172 the chain is on the extracellular side; the sequence is ELFRDRYNHTFCFEKF. An extracellular loop 2 (ECL2) region spans residues 157 to 172; the sequence is ELFRDRYNHTFCFEKF. N164 is a glycosylation site (N-linked (GlcNAc...) asparagine). A helical transmembrane segment spans residues 173–210; the sequence is PMEGWVAWMNLYRVFVGFLFPWALMLLSYRGILRAVRG. Topologically, residues 211–214 are cytoplasmic; sequence SVST. The chain crosses the membrane as a helical span at residues 215 to 250; the sequence is ERQEKVKIKRLALSLIAIVLVCFAPYHVLLLSRSAV. Over 251–260 the chain is Extracellular; that stretch reads YLRRPRDCGF. A helical membrane pass occupies residues 261–289; sequence EERVFSAYHSSLAFTSLNCVADPILYCLV. Residues 290–362 lie on the Cytoplasmic side of the membrane; sequence NEGARSDVAK…VQLKMLPPAQ (73 aa).

Belongs to the G-protein coupled receptor 1 family.

The protein resides in the cell membrane. With respect to regulation, activated by a network of residues that connects an extracellular-facing cavity to Glu-145, a conserved charged residue buried in the transmembrane core of the receptor. Protonation likely drives conformational changes in extracellular loop 2 (ECL2), which stabilizes movement of transmembrane 3 (TM3) and a series of rearrangements that connect the extracellular-facing cavity to Glu-145, a residue only conserved in proton-sensing G-protein coupled receptors. Proton-sensing G-protein coupled receptor activated by extracellular pH, which is required to monitor pH changes and generate adaptive reactions. Activated by an optimal pH of 6.8-7.2. Ligand binding causes a conformation change that triggers signaling via guanine nucleotide-binding proteins (G proteins) and modulates the activity of downstream effectors, such as adenylate cyclase. GPR4 is mainly coupled to G(s) G proteins and mediates activation of adenylate cyclase activity. May also couple with G(q) and G(12)/G(13) G proteins. Acts as a key regulator of respiratory sensitivity to CO2/H(+) in brain retrotrapezoid nucleus neurons: acts by mediating detection of protons generated by the formation of carbonic acid in the blood, an important mechanism to impulse to breathe. Also acts as a regulator of acid secretion in the kidney collecting duct by maintaining acid-base homeostasis in the kidney. Acidosis-induced GPR4 activation increases paracellular gap formation and permeability of vascular endothelial cells, possibly through the G(12)/G(13)/Rho GTPase signaling pathway. In Bos taurus (Bovine), this protein is G-protein coupled receptor 4 (GPR4).